The chain runs to 345 residues: Cell division control protein 2 homolog 2 (345 aa).

A disordered region spans residues 1–44 (MQVQVQEGQTACDGSLRPLPSAGPASFVPRSLRPAPLRGTSTPD). In terms of domain architecture, Protein kinase spans 46-328 (YSRIEKVGEG…AYEALQHSYF (283 aa)). Residues 52-60 (VGEGSYGIV) and Lys-75 contribute to the ATP site. The residue at position 56 (Ser-56) is a Phosphoserine. Tyr-57 bears the Phosphotyrosine mark. Catalysis depends on Asp-168, which acts as the Proton acceptor.

The protein belongs to the protein kinase superfamily. CMGC Ser/Thr protein kinase family. CDC2/CDKX subfamily. As to quaternary structure, forms a stable but non-covalent complex with a regulatory subunit and with a cyclin.

The catalysed reaction is L-seryl-[protein] + ATP = O-phospho-L-seryl-[protein] + ADP + H(+). It catalyses the reaction L-threonyl-[protein] + ATP = O-phospho-L-threonyl-[protein] + ADP + H(+). With respect to regulation, phosphorylation at Ser-56 or Tyr-57 inactivates the enzyme. Probably involved in the control of the cell cycle. The sequence is that of Cell division control protein 2 homolog 2 (CRK2) from Trypanosoma brucei brucei.